Reading from the N-terminus, the 311-residue chain is Giardin subunit gamma (311 aa).

The stretch at 185-233 forms a coiled coil; that stretch reads GLQTEINSLEAIIEREFAQAANRLNQEVSNFKESFDASERNIKLQKKHV.

As to quaternary structure, interacts with EB1.

The protein localises to the cytoplasm. It localises to the cytoskeleton. Giardins are involved in parasite attachment to the intestinal mucosa and in the cytoskeletal disassembly and reassembly that marks the transition from infectious trophozoite to transmissible cyst. They may interact with other cytoskeletal proteins such as microtubules in the microribbons or crossbridges, to maintain the integrity of the ventral disk. Involved in formation of the ventral disk. This is Giardin subunit gamma from Giardia intestinalis (Giardia lamblia).